A 1372-amino-acid chain; its full sequence is DNA-directed RNA polymerase subunit beta (1372 aa).

The protein belongs to the RNA polymerase beta chain family. As to quaternary structure, the RNAP catalytic core consists of 2 alpha, 1 beta, 1 beta' and 1 omega subunit. When a sigma factor is associated with the core the holoenzyme is formed, which can initiate transcription.

It carries out the reaction RNA(n) + a ribonucleoside 5'-triphosphate = RNA(n+1) + diphosphate. Its function is as follows. DNA-dependent RNA polymerase catalyzes the transcription of DNA into RNA using the four ribonucleoside triphosphates as substrates. The chain is DNA-directed RNA polymerase subunit beta from Rickettsia bellii (strain RML369-C).